The sequence spans 307 residues: 3-methyl-2-oxobutanoate hydroxymethyltransferase (307 aa).

D61 and D100 together coordinate Mg(2+). 3-methyl-2-oxobutanoate-binding positions include 61-62 (DS), D100, and K130. A Mg(2+)-binding site is contributed by E132. E199 functions as the Proton acceptor in the catalytic mechanism.

It belongs to the PanB family. In terms of assembly, homodecamer; pentamer of dimers. Mg(2+) serves as cofactor.

The protein localises to the cytoplasm. It catalyses the reaction 3-methyl-2-oxobutanoate + (6R)-5,10-methylene-5,6,7,8-tetrahydrofolate + H2O = 2-dehydropantoate + (6S)-5,6,7,8-tetrahydrofolate. Its pathway is cofactor biosynthesis; (R)-pantothenate biosynthesis; (R)-pantoate from 3-methyl-2-oxobutanoate: step 1/2. Functionally, catalyzes the reversible reaction in which hydroxymethyl group from 5,10-methylenetetrahydrofolate is transferred onto alpha-ketoisovalerate to form ketopantoate. This is 3-methyl-2-oxobutanoate hydroxymethyltransferase from Nitratidesulfovibrio vulgaris (strain ATCC 29579 / DSM 644 / CCUG 34227 / NCIMB 8303 / VKM B-1760 / Hildenborough) (Desulfovibrio vulgaris).